Reading from the N-terminus, the 434-residue chain is Citrate synthase (434 aa).

Residues His-310 and Asp-368 contribute to the active site.

It belongs to the citrate synthase family.

The catalysed reaction is oxaloacetate + acetyl-CoA + H2O = citrate + CoA + H(+). It participates in carbohydrate metabolism; tricarboxylic acid cycle; isocitrate from oxaloacetate: step 1/2. The chain is Citrate synthase (gltA) from Bradyrhizobium diazoefficiens (strain JCM 10833 / BCRC 13528 / IAM 13628 / NBRC 14792 / USDA 110).